The chain runs to 947 residues: Protein translocase subunit SecA 1 (947 aa).

ATP is bound by residues Gln83, 101-105 (GEGKT), and Asp490. The segment at 860–947 (AKAQEQTGQG…KTSKPTRRRG (88 aa)) is disordered. Over residues 925–934 (TRRERREAAR) the composition is skewed to basic and acidic residues. Positions 935–947 (KQAKTSKPTRRRG) are enriched in basic residues.

This sequence belongs to the SecA family. As to quaternary structure, monomer and homodimer. Part of the essential Sec protein translocation apparatus which comprises SecA, SecYEG and auxiliary proteins SecDF. Other proteins may also be involved.

It localises to the cell membrane. The protein resides in the cytoplasm. It carries out the reaction ATP + H2O + cellular proteinSide 1 = ADP + phosphate + cellular proteinSide 2.. Part of the Sec protein translocase complex. Interacts with the SecYEG preprotein conducting channel. Has a central role in coupling the hydrolysis of ATP to the transfer of proteins into and across the cell membrane, serving as an ATP-driven molecular motor driving the stepwise translocation of polypeptide chains across the membrane. This is Protein translocase subunit SecA 1 from Mycobacterium sp. (strain JLS).